A 203-amino-acid chain; its full sequence is Small ribosomal subunit protein uS4c (203 aa).

Residues 89 to 152 enclose the S4 RNA-binding domain; it reads MRLDNILFRL…QSRTLIQNSL (64 aa).

The protein belongs to the universal ribosomal protein uS4 family. In terms of assembly, part of the 30S ribosomal subunit. Contacts protein S5. The interaction surface between S4 and S5 is involved in control of translational fidelity.

The protein resides in the plastid. In terms of biological role, one of the primary rRNA binding proteins, it binds directly to 16S rRNA where it nucleates assembly of the body of the 30S subunit. With S5 and S12 plays an important role in translational accuracy. The sequence is that of Small ribosomal subunit protein uS4c (rps4) from Orobanche minor (Small broomrape).